We begin with the raw amino-acid sequence, 295 residues long: 33 kDa chaperonin (295 aa).

Cystine bridges form between Cys-236–Cys-238 and Cys-269–Cys-272.

Belongs to the HSP33 family. Under oxidizing conditions two disulfide bonds are formed involving the reactive cysteines. Under reducing conditions zinc is bound to the reactive cysteines and the protein is inactive.

The protein localises to the cytoplasm. Redox regulated molecular chaperone. Protects both thermally unfolding and oxidatively damaged proteins from irreversible aggregation. Plays an important role in the bacterial defense system toward oxidative stress. This is 33 kDa chaperonin from Geobacter sp. (strain M21).